Consider the following 668-residue polypeptide: Probable serine/threonine-protein kinase abkB (668 aa).

Disordered stretches follow at residues 88-111 (YTNI…KTTA) and 132-162 (EVEE…DDNK). Residues 91 to 105 (IGGTSPNRQSVPENS) are compositionally biased toward polar residues. A coiled-coil region spans residues 131–163 (KEVEEEIIDKNERGKEQEQENKQQKEQKDDNKS). Basic and acidic residues predominate over residues 138–162 (IDKNERGKEQEQENKQQKEQKDDNK). The Protein kinase domain maps to 314–668 (DFERLPINSA…EIPSTYHHHH (355 aa)). Residues 320–328 (INSASLAQV) and Lys-346 contribute to the ATP site. The Proton acceptor role is filled by Asp-478.

It belongs to the protein kinase superfamily. ADCK protein kinase family.

The protein is Probable serine/threonine-protein kinase abkB (abkB) of Dictyostelium discoideum (Social amoeba).